A 924-amino-acid chain; its full sequence is Protein SMAX1-LIKE 2 (924 aa).

The Clp R domain occupies 8 to 181 (IQQTLTPEAA…SAIEQSLIGN (174 aa)). Residues 12 to 83 (LTPEAATVLN…LCFSVALERL (72 aa)) are repeat 1. A compositionally biased stretch (low complexity) spans 86–105 (TSTTTTTTSSSSSSSPSQTQ). Residues 86–107 (TSTTTTTTSSSSSSSPSQTQEP) are disordered. Residues 109–181 (LSNALTAALK…SAIEQSLIGN (73 aa)) are repeat 2. The interval 522 to 552 (TRSDITPPGSPVGTDLVLGRPNRGLSSPEKK) is disordered. The EAR motif lies at 780–784 (FDLNE).

This sequence belongs to the ClpA/ClpB family. Interacts probably with TPL/TPR in an EAR-motif dependent manner. Expressed in seedlings and leaves. Detected in roots and axillary branches.

In terms of biological role, probable component of a transcriptional corepressor complex that acts specifically in the karrikin pathway. Controls seedling growth redundantly with SMAX1, but is not involved in leaf morphology, shoot branching or germination control. This chain is Protein SMAX1-LIKE 2, found in Arabidopsis thaliana (Mouse-ear cress).